A 161-amino-acid polypeptide reads, in one-letter code: Nucleotide-binding protein Csal_2524 (161 aa).

The protein belongs to the YajQ family.

In terms of biological role, nucleotide-binding protein. The protein is Nucleotide-binding protein Csal_2524 of Chromohalobacter salexigens (strain ATCC BAA-138 / DSM 3043 / CIP 106854 / NCIMB 13768 / 1H11).